A 654-amino-acid polypeptide reads, in one-letter code: DNA ligase (654 aa).

Residues 32 to 36 and 81 to 82 contribute to the NAD(+) site; these read DAVYD and SL. Lysine 112 serves as the catalytic N6-AMP-lysine intermediate. NAD(+)-binding residues include arginine 133, glutamate 167, and lysine 306. Cysteine 400, cysteine 403, cysteine 416, and cysteine 421 together coordinate Zn(2+). A BRCT domain is found at 577–654; sequence ESSSIFSHKT…EEELLKYLKE (78 aa).

The protein belongs to the NAD-dependent DNA ligase family. LigA subfamily. The cofactor is Mg(2+). Mn(2+) is required as a cofactor.

The catalysed reaction is NAD(+) + (deoxyribonucleotide)n-3'-hydroxyl + 5'-phospho-(deoxyribonucleotide)m = (deoxyribonucleotide)n+m + AMP + beta-nicotinamide D-nucleotide.. Functionally, DNA ligase that catalyzes the formation of phosphodiester linkages between 5'-phosphoryl and 3'-hydroxyl groups in double-stranded DNA using NAD as a coenzyme and as the energy source for the reaction. It is essential for DNA replication and repair of damaged DNA. The polypeptide is DNA ligase (Helicobacter acinonychis (strain Sheeba)).